Consider the following 2156-residue polypeptide: Probable capsid protein 3 (2156 aa).

The segment at Asn1319 to His1345 is disordered. Over residues Lys1326–His1345 the composition is skewed to basic and acidic residues.

Belongs to the NCLDV major capsid protein family.

It localises to the virion. This chain is Probable capsid protein 3, found in Acanthamoeba polyphaga mimivirus (APMV).